The chain runs to 275 residues: MYSDNSQRKLTKAVTLSTLKKMKADKEKITCLTSYDASFTNVMNVAGVETILVGDSLGMVIQGQDSTLPVTIEDMCYHTAAVKRGNTNAFILADMSFMSYSKPEQALDNAAKLMQAGANMVKLEGGSWLADTIKLLSQRGIPVCAHLGLTPQSVHKFGGYKVQGKSQDAADLLLQESLDLVAAGADILLYECIPTELGKTLTDAVPVPTIGIGAGHHTDGQVLVMHDMLGINLGHTPKFVKNFLTEGRNVTEAFEAYVKEVKDMTFPGPEHGFKS.

D55 and D94 together coordinate Mg(2+). 3-methyl-2-oxobutanoate contacts are provided by residues 55–56 (DS), D94, and K122. Residue E124 participates in Mg(2+) binding. The active-site Proton acceptor is E191.

Belongs to the PanB family. As to quaternary structure, homodecamer; pentamer of dimers. Mg(2+) serves as cofactor.

The protein localises to the cytoplasm. It carries out the reaction 3-methyl-2-oxobutanoate + (6R)-5,10-methylene-5,6,7,8-tetrahydrofolate + H2O = 2-dehydropantoate + (6S)-5,6,7,8-tetrahydrofolate. Its pathway is cofactor biosynthesis; (R)-pantothenate biosynthesis; (R)-pantoate from 3-methyl-2-oxobutanoate: step 1/2. Functionally, catalyzes the reversible reaction in which hydroxymethyl group from 5,10-methylenetetrahydrofolate is transferred onto alpha-ketoisovalerate to form ketopantoate. This Marinomonas sp. (strain MWYL1) protein is 3-methyl-2-oxobutanoate hydroxymethyltransferase.